The sequence spans 368 residues: Large ribosomal subunit protein bL27m (368 aa).

The N-terminal 20 residues, 1–20 (MFSGLHTSKYACQVVVQIRT), are a transit peptide targeting the mitochondrion. The disordered stretch occupies residues 23-44 (KRAAGSRTSMKDSAGRRLGPKK). The segment covering 31–44 (SMKDSAGRRLGPKK) has biased composition (basic and acidic residues).

The protein belongs to the bacterial ribosomal protein bL27 family.

Its subcellular location is the mitochondrion. In terms of biological role, component of the large subunit of mitochondrial ribosome. The protein is Large ribosomal subunit protein bL27m (MRPL2) of Candida glabrata (strain ATCC 2001 / BCRC 20586 / JCM 3761 / NBRC 0622 / NRRL Y-65 / CBS 138) (Yeast).